The chain runs to 167 residues: Lipoprotein signal peptidase (167 aa).

The next 2 membrane-spanning stretches (helical) occupy residues 67 to 87 (WILV…LWRA) and 91 to 111 (LVAL…IDRI). Residues D118 and D136 contribute to the active site. A helical transmembrane segment spans residues 127-147 (FSWYVFNLADAAIVAGVALLI).

It belongs to the peptidase A8 family.

Its subcellular location is the cell inner membrane. It carries out the reaction Release of signal peptides from bacterial membrane prolipoproteins. Hydrolyzes -Xaa-Yaa-Zaa-|-(S,diacylglyceryl)Cys-, in which Xaa is hydrophobic (preferably Leu), and Yaa (Ala or Ser) and Zaa (Gly or Ala) have small, neutral side chains.. It participates in protein modification; lipoprotein biosynthesis (signal peptide cleavage). Its function is as follows. This protein specifically catalyzes the removal of signal peptides from prolipoproteins. The chain is Lipoprotein signal peptidase from Beijerinckia indica subsp. indica (strain ATCC 9039 / DSM 1715 / NCIMB 8712).